A 334-amino-acid polypeptide reads, in one-letter code: Biotin synthase (334 aa).

A Radical SAM core domain is found at 41–260 (TRLETASLLS…IAVARIMMPR (220 aa)). [4Fe-4S] cluster is bound by residues Cys-56, Cys-60, and Cys-63. [2Fe-2S] cluster contacts are provided by Cys-100, Cys-131, Cys-191, and Arg-264.

It belongs to the radical SAM superfamily. Biotin synthase family. As to quaternary structure, homodimer. [4Fe-4S] cluster is required as a cofactor. It depends on [2Fe-2S] cluster as a cofactor.

It carries out the reaction (4R,5S)-dethiobiotin + (sulfur carrier)-SH + 2 reduced [2Fe-2S]-[ferredoxin] + 2 S-adenosyl-L-methionine = (sulfur carrier)-H + biotin + 2 5'-deoxyadenosine + 2 L-methionine + 2 oxidized [2Fe-2S]-[ferredoxin]. It participates in cofactor biosynthesis; biotin biosynthesis; biotin from 7,8-diaminononanoate: step 2/2. Functionally, catalyzes the conversion of dethiobiotin (DTB) to biotin by the insertion of a sulfur atom into dethiobiotin via a radical-based mechanism. This Bradyrhizobium sp. (strain ORS 278) protein is Biotin synthase.